A 311-amino-acid polypeptide reads, in one-letter code: Oxygen-dependent coproporphyrinogen-III oxidase (311 aa).

Residue S100 coordinates substrate. A divalent metal cation contacts are provided by H104 and H114. Catalysis depends on H114, which acts as the Proton donor. 116–118 (NVR) contacts substrate. A divalent metal cation-binding residues include H153 and H183. The important for dimerization stretch occupies residues 248–283 (YAEFNLVYDRGTLFGLQSGGRTESILMSLPPIVHWE). Residue 266-268 (GGR) participates in substrate binding.

The protein belongs to the aerobic coproporphyrinogen-III oxidase family. In terms of assembly, homodimer. The cofactor is a divalent metal cation.

It localises to the cytoplasm. It carries out the reaction coproporphyrinogen III + O2 + 2 H(+) = protoporphyrinogen IX + 2 CO2 + 2 H2O. It participates in porphyrin-containing compound metabolism; protoporphyrin-IX biosynthesis; protoporphyrinogen-IX from coproporphyrinogen-III (O2 route): step 1/1. Its function is as follows. Involved in the heme biosynthesis. Catalyzes the aerobic oxidative decarboxylation of propionate groups of rings A and B of coproporphyrinogen-III to yield the vinyl groups in protoporphyrinogen-IX. This is Oxygen-dependent coproporphyrinogen-III oxidase from Legionella pneumophila (strain Corby).